An 800-amino-acid polypeptide reads, in one-letter code: MSLVYLLIAILVIMAMILLMSKRRALAKYAGYIALVAPVISSIYFLIQIPSVAKLQYLSTSIPWIKTLDINLDLRLDGLSLMFSLIISLIGIAVFFYATQYLSSRKDNLPRFYFYLTLFMFSMIGIVLSDNTILMYIFWELTSVSSFLLISYWYNNGDSQFGAMQSFMITVFGGLALLVGFIMLYIMTGTNNITEILGQADHIKNHGLFIPMIFMFLLGAFTKSAQFPFHIWLPRAMAAPTPVSAYLHSATMVKAGIFLLLRFTPLLGLSNMYVYIVTFVGLITMLFGSITALKQWDLKGILAYSTISQLGMIMAMVGIGGGYAQHQQDAIASIYVFVLFGALFHLMNHAIFKCALFMGVGILDHEAGSRDIRILSGMRQLFPKMNLVMTIAALSMAGVPFLNGFLSKEMFLDALTQTGQLSQFSLISMIAIVFVGVIASVFTFTYALYMVKEVFWTKYDSKVFTKKNIHEPWLFSLPSLILMVLVPVIFFVPNIFGKGIIVLALRAVSGGNHQIDQLAPHVSQWHGFNIPLLLTIIIILLGSVLAIKVDWKKVFTGKIRQISVSKSYEMVYRHFEKFATKRFKRVMQDRLNQYIIMTLGIFMIIIGYGYIRIGLPKVHQLHVSEFGALEIILAIVTVTIGISLIFIRQRLTMVILNGVIGFVVTLFFIAMKAPDLALTQLVVETITTILFIVSFSRLPNVPRSNANKKREIIKISVSLLMALIVVSLIFITQQTDGLSSISDFYLKADKLTGGKNIVNAILGDFRALDTLFEGLVLIITGLGIYTLLNYQDRRGQDERE.

The next 20 membrane-spanning stretches (helical) occupy residues 1 to 21, 33 to 53, 78 to 98, 118 to 138, 167 to 187, 207 to 227, 241 to 261, 273 to 293, 300 to 320, 331 to 351, 387 to 407, 424 to 444, 472 to 492, 527 to 547, 595 to 615, 627 to 647, 651 to 671, 676 to 696, 712 to 732, and 768 to 788; these read MSLVYLLIAILVIMAMILLMS, IALVAPVISSIYFLIQIPSVA, GLSLMFSLIISLIGIAVFFYA, LFMFSMIGIVLSDNTILMYIF, FMITVFGGLALLVGFIMLYIM, GLFIPMIFMFLLGAFTKSAQF, TPVSAYLHSATMVKAGIFLLL, YVYIVTFVGLITMLFGSITAL, GILAYSTISQLGMIMAMVGIG, IASIYVFVLFGALFHLMNHAI, LVMTIAALSMAGVPFLNGFLS, FSLISMIAIVFVGVIASVFTF, PWLFSLPSLILMVLVPVIFFV, GFNIPLLLTIIIILLGSVLAI, IIMTLGIFMIIIGYGYIRIGL, GALEIILAIVTVTIGISLIFI, LTMVILNGVIGFVVTLFFIAM, LALTQLVVETITTILFIVSFS, IIKISVSLLMALIVVSLIFIT, and LDTLFEGLVLIITGLGIYTLL.

The protein belongs to the CPA3 antiporters (TC 2.A.63) subunit A family. May form a heterooligomeric complex that consists of seven subunits: mnhA2, mnhB2, mnhC2, mnhD2, mnhE2, mnhF2 and mnhG2.

The protein localises to the cell membrane. The protein is Putative antiporter subunit mnhA2 (mnhA2) of Staphylococcus aureus (strain MSSA476).